We begin with the raw amino-acid sequence, 1297 residues long: Protein ENHANCED DOWNY MILDEW 2 (1297 aa).

The PHD-type 1; degenerate zinc finger occupies 222–281 (ESVCAICDNGGEILCCEGSCLRSFHATKKDGEDSLCDSLGFNKMQVEAIQKYFCPNCEHK). Zn(2+)-binding residues include Cys-237, Cys-241, Cys-275, Cys-278, Cys-285, Cys-288, Cys-306, Cys-311, His-316, Cys-319, Cys-346, and His-349. The PHD-type 2; atypical zinc-finger motif lies at 282–352 (IHQCFICKNL…EYTCPLHKCS (71 aa)). The PHD-type 3; degenerate zinc-finger motif lies at 351-417 (CSVCENGEVK…RVLIYCQEHE (67 aa)). The Nuclear localization signal 1 motif lies at 445–452 (QRRILESH). Disordered regions lie at residues 471 to 547 (CGKA…ARDA) and 562 to 598 (TQEPNPVKPGRVIPVDSKHNKTDSIASKEPGSEIPTL). A compositionally biased stretch (low complexity) spans 475–487 (SKNSFRSSFPSSK). The Nuclear localization signal 2 signature appears at 492–499 (TKKHGLVS). Residues 526–547 (KMMEDSREAGKNKLGVKEARDA) are compositionally biased toward basic and acidic residues. 2 consecutive short sequence motifs (nuclear localization signal) follow at residues 610–617 (MKKATEEI) and 979–986 (LKKEGKTK). Basic and acidic residues-rich tracts occupy residues 969–990 (QSDHLSRRSQLKKEGKTKDYSG) and 1096–1109 (EVSRDRPSSVRTSR). 3 disordered regions span residues 969 to 1017 (QSDH…GELS), 1085 to 1109 (HGCKVQGTGKPEVSRDRPSSVRTSR), and 1260 to 1297 (FPLPPPPPSDFEMSPRGFAPGPNPNYPYMSRSGGWIND).

In terms of assembly, interacts with WNK8 in nucleus; this interaction is involved in developmental processes regulation but not in RPP7-dependent disease resistance. Interacts with EML1 and EML2 in nucleus. Component of the ASI1-AIPP1-EDM2 (AAE) RNA regulatory complex composed of at least AIPP1/EDM3, ASI1 and EDM2 and may contain CPL2, AIPP2 and AIPP3/BDT1. Binds directly to AIPP1/EDM3. Co-associates with AIPP1/EDM3 to histone H3 lysine 9 dimethylation (H3K9me2)-marked chromatin and transcripts at a critical proximal polyadenylation site of RPP7 to hamper proximal transcript polyadeylation/termination. Phosphorylated by WNK8.

The protein localises to the nucleus. Functionally, cellular antisilencing factor and regulator of genome DNA methylation patterns involved in the regulation of chromatin states. Together with SUVH4, monitors repressive epigenetic marks H3K27me1, H3K9me2, and prevents DNA-methylation at CHG sites, affecting especially the expression of transposons and developmentally important genes. Collaboratively with ASI1 and AIPP1/EDM3, the AAE complex regulates alternative RNA processing (e.g. alternative splicing) and epigenetic silencing (e.g. H3K9me2) of intronic heterochromatin-containing genes as well as genic heterochromatin-containing genes by promoting distal 3' polyadenylation. Epigenetic reader that binds DNA and contributes to transcriptional transposable element (TE) silencing by modulating levels of the repressive post-translational histone modifications (PHM) H3K9me2. In cv. Columbia, required for RPP7-dependent disease resistance against the Hyaloperonospora arabidopsidis isolate Hiks1, by promoting levels of RPP7 via alternative polyadenylation (APA), resulting from cooption of epigenetic information at the TE insertion locus COPIA-R7. Exhibits a global role in NLR (nucleotide-binding, leucine-rich repeat) defense genes epigenetic (e.g. H3K9me2 hallmarks) expression control; promotes the accumulation of RPP7, RPP4 and some other proteins, but mediates the repression of several other NLR products, probably to compensate for fitness penalties caused by defense mechanisms. Regulates development processes such as the formation of leaf pavement cells, leaf expansion, fertility and flowering. Prevents FLC accumulation to control flowering. Modulates stomatal development by regulating the methylation-mediated silencing of ERECTA receptor genes (e.g. ER, ERL1 and ERL2) and preventing cell divisions. This chain is Protein ENHANCED DOWNY MILDEW 2, found in Arabidopsis thaliana (Mouse-ear cress).